The primary structure comprises 110 residues: Large ribosomal subunit protein uL22 (110 aa).

Belongs to the universal ribosomal protein uL22 family. In terms of assembly, part of the 50S ribosomal subunit.

This protein binds specifically to 23S rRNA; its binding is stimulated by other ribosomal proteins, e.g. L4, L17, and L20. It is important during the early stages of 50S assembly. It makes multiple contacts with different domains of the 23S rRNA in the assembled 50S subunit and ribosome. Functionally, the globular domain of the protein is located near the polypeptide exit tunnel on the outside of the subunit, while an extended beta-hairpin is found that lines the wall of the exit tunnel in the center of the 70S ribosome. The chain is Large ribosomal subunit protein uL22 from Vibrio campbellii (strain ATCC BAA-1116).